The chain runs to 163 residues: ATP synthase subunit b 1 (163 aa).

Residues 6–26 traverse the membrane as a helical segment; that stretch reads LAELWVAVAFLLFVGILIYVG.

It belongs to the ATPase B chain family. In terms of assembly, F-type ATPases have 2 components, F(1) - the catalytic core - and F(0) - the membrane proton channel. F(1) has five subunits: alpha(3), beta(3), gamma(1), delta(1), epsilon(1). F(0) has three main subunits: a(1), b(2) and c(10-14). The alpha and beta chains form an alternating ring which encloses part of the gamma chain. F(1) is attached to F(0) by a central stalk formed by the gamma and epsilon chains, while a peripheral stalk is formed by the delta and b chains.

The protein resides in the cell inner membrane. In terms of biological role, f(1)F(0) ATP synthase produces ATP from ADP in the presence of a proton or sodium gradient. F-type ATPases consist of two structural domains, F(1) containing the extramembraneous catalytic core and F(0) containing the membrane proton channel, linked together by a central stalk and a peripheral stalk. During catalysis, ATP synthesis in the catalytic domain of F(1) is coupled via a rotary mechanism of the central stalk subunits to proton translocation. Functionally, component of the F(0) channel, it forms part of the peripheral stalk, linking F(1) to F(0). The sequence is that of ATP synthase subunit b 1 from Xanthobacter autotrophicus (strain ATCC BAA-1158 / Py2).